A 36-amino-acid chain; its full sequence is MTTFHFPSIFVPLVGLVFPAIAIASLFLHVQKNKIV.

A helical transmembrane segment spans residues 8 to 28 (SIFVPLVGLVFPAIAIASLFL).

It belongs to the PsaI family.

It localises to the plastid. Its subcellular location is the chloroplast thylakoid membrane. Its function is as follows. May help in the organization of the PsaL subunit. This is Photosystem I reaction center subunit VIII from Jasminum nudiflorum (Winter jasmine).